A 450-amino-acid polypeptide reads, in one-letter code: GTPase Der (450 aa).

EngA-type G domains follow at residues 3–170 (PTIA…LATG) and 183–356 (LKIA…AECS). GTP contacts are provided by residues 9 to 16 (GRPNVGKS), 56 to 60 (DTGGL), 122 to 125 (NKVD), 189 to 196 (GRPNAGKS), 236 to 240 (DTAGV), and 301 to 304 (NKID). The KH-like domain occupies 357–441 (LRISTGQLNR…PLNIVFRSTF (85 aa)).

This sequence belongs to the TRAFAC class TrmE-Era-EngA-EngB-Septin-like GTPase superfamily. EngA (Der) GTPase family. Associates with the 50S ribosomal subunit.

Its function is as follows. GTPase that plays an essential role in the late steps of ribosome biogenesis. This Maridesulfovibrio salexigens (strain ATCC 14822 / DSM 2638 / NCIMB 8403 / VKM B-1763) (Desulfovibrio salexigens) protein is GTPase Der.